The chain runs to 137 residues: Large ribosomal subunit protein uL16 (137 aa).

Belongs to the universal ribosomal protein uL16 family. As to quaternary structure, part of the 50S ribosomal subunit.

Functionally, binds 23S rRNA and is also seen to make contacts with the A and possibly P site tRNAs. This Streptococcus suis (strain 98HAH33) protein is Large ribosomal subunit protein uL16.